Consider the following 79-residue polypeptide: Sulfur carrier protein TusA (79 aa).

The active-site Cysteine persulfide intermediate is the Cys-16.

It belongs to the sulfur carrier protein TusA family.

It localises to the cytoplasm. Sulfur carrier protein which probably makes part of a sulfur-relay system. In Pseudomonas aeruginosa (strain LESB58), this protein is Sulfur carrier protein TusA.